We begin with the raw amino-acid sequence, 402 residues long: Argininosuccinate synthase (402 aa).

ATP is bound by residues 11–19 (AYSGGLDTS) and alanine 39. Residues tyrosine 90 and serine 95 each coordinate L-citrulline. Glycine 120 serves as a coordination point for ATP. Residues threonine 122, asparagine 126, and aspartate 127 each contribute to the L-aspartate site. Position 126 (asparagine 126) interacts with L-citrulline. Positions 130, 179, 188, 264, and 276 each coordinate L-citrulline.

The protein belongs to the argininosuccinate synthase family. Type 1 subfamily. Homotetramer.

Its subcellular location is the cytoplasm. It catalyses the reaction L-citrulline + L-aspartate + ATP = 2-(N(omega)-L-arginino)succinate + AMP + diphosphate + H(+). It participates in amino-acid biosynthesis; L-arginine biosynthesis; L-arginine from L-ornithine and carbamoyl phosphate: step 2/3. The polypeptide is Argininosuccinate synthase (Roseiflexus castenholzii (strain DSM 13941 / HLO8)).